The chain runs to 243 residues: Probable fructoselysine utilization operon transcriptional repressor (243 aa).

The HTH gntR-type domain occupies 10 to 78 (QLLYATVRQR…QGKGTFVQSQ (69 aa)). Residues 38–57 (ENELCTQYNVSRITIRKAIS) constitute a DNA-binding region (H-T-H motif).

The protein operates within carbohydrate metabolism; fructoselysine degradation [regulation]. Functionally, may regulate the transcription of the frlABCDR operon, involved in the utilization of fructoselysine and psicoselysine. In Shigella flexneri, this protein is Probable fructoselysine utilization operon transcriptional repressor (frlR).